Here is a 257-residue protein sequence, read N- to C-terminus: Zinc import ATP-binding protein ZnuC (257 aa).

One can recognise an ABC transporter domain in the interval 5 to 220 (VELQSVTVTF…PSYVALFGQQ (216 aa)). 37–44 (GPNGAGKS) provides a ligand contact to ATP. Residues 234-257 (HEHDLAGSPVGPCQHNKQHGHDNA) are disordered.

Belongs to the ABC transporter superfamily. Zinc importer (TC 3.A.1.15.5) family. In terms of assembly, the complex is composed of two ATP-binding proteins (ZnuC), two transmembrane proteins (ZnuB) and a solute-binding protein (ZnuA).

Its subcellular location is the cell inner membrane. It carries out the reaction Zn(2+)(out) + ATP(in) + H2O(in) = Zn(2+)(in) + ADP(in) + phosphate(in) + H(+)(in). In terms of biological role, part of the ABC transporter complex ZnuABC involved in zinc import. Responsible for energy coupling to the transport system. This is Zinc import ATP-binding protein ZnuC from Photobacterium profundum (strain SS9).